Consider the following 329-residue polypeptide: Deoxynucleotidyltransferase terminal-interacting protein 1 (329 aa).

2 disordered regions span residues 1–22 (MGAT…GGLE) and 147–178 (KRGR…ILSS). Residues 56–147 (MTTSFTDPAI…RLTHELPGIK (92 aa)) form an important for dimerization region. The span at 147–158 (KRGRQAEEECAH) shows a compositional bias: basic and acidic residues. The a.T hook DNA-binding region spans 159-173 (RGSPLPKKRKGRPPG). At Ser161 the chain carries Phosphoserine. Positions 164–170 (PKKRKGR) match the Nuclear localization signal motif. The segment at 197–316 (REGPKWDPAR…MRKYMETLRT (120 aa)) is important for DNA and nucleosome binding. A DNA-binding region (H-T-H motif) is located at residues 216–237 (GSRANKALGMGGTRGRIYIKHP).

Monomer and homodimer. A minor proportion may form homotrimers. Interacts with ZNF541. Interacts with the terminal deoxynucleotidyltransferase DNTT. Interacts with TRERF1. Identified in a histone deacetylase complex that contains DNTTIP1, HDAC1 and MIDEAS; this complex assembles into a tetramer that contains four copies of each protein chain. Component of a histone deacetylase complex containing DNTTIP1, ZNF541, HDAC1 and HDAC2. Identified in a complex with KCTD19, HDAC1, HDAC2 and ZNF541.

The protein localises to the nucleus. Functionally, increases DNTT terminal deoxynucleotidyltransferase activity (in vitro). Also acts as a transcriptional regulator, binding to the consensus sequence 5'-GNTGCATG-3' following an AT-tract. Associates with RAB20 promoter and positively regulates its transcription. Binds DNA and nucleosomes; may recruit HDAC1 complexes to nucleosomes or naked DNA. The protein is Deoxynucleotidyltransferase terminal-interacting protein 1 (DNTTIP1) of Pongo abelii (Sumatran orangutan).